A 230-amino-acid polypeptide reads, in one-letter code: GTP cyclohydrolase III (230 aa).

The protein belongs to the archaeal-type GTP cyclohydrolase family.

The catalysed reaction is GTP + 3 H2O = 2-amino-5-formylamino-6-(5-phospho-D-ribosylamino)pyrimidin-4(3H)-one + 2 phosphate + 2 H(+). Functionally, catalyzes the formation of 2-amino-5-formylamino-6-ribofuranosylamino-4(3H)-pyrimidinone ribonucleotide monophosphate and inorganic phosphate from GTP. Also has an independent pyrophosphate phosphohydrolase activity. The sequence is that of GTP cyclohydrolase III from Saccharolobus islandicus (strain M.14.25 / Kamchatka #1) (Sulfolobus islandicus).